Here is a 426-residue protein sequence, read N- to C-terminus: PI-PLC X domain-containing protein At5g67130 (426 aa).

The N-terminal stretch at 1–28 (MSACINGLCRAVTVSLLLLLLSFSFSSA) is a signal peptide. Positions 76–232 (IINGLPFNKY…MVQENHRLLV (157 aa)) constitute a PI-PLC X-box domain. Asn151 and Asn255 each carry an N-linked (GlcNAc...) asparagine glycan. The disordered stretch occupies residues 258 to 277 (GDPGVKRGSCPNRKESQPLN). N-linked (GlcNAc...) asparagine glycosylation occurs at Asn370. Ser404 carries GPI-anchor amidated serine lipidation. A propeptide spans 405-426 (VAQLNNIVVFCFSLLPLLIFLL) (removed in mature form).

It localises to the cell membrane. This is PI-PLC X domain-containing protein At5g67130 from Arabidopsis thaliana (Mouse-ear cress).